Consider the following 285-residue polypeptide: 33 kDa chaperonin (285 aa).

Disulfide bonds link Cys-228–Cys-230 and Cys-261–Cys-264.

Belongs to the HSP33 family. Post-translationally, under oxidizing conditions two disulfide bonds are formed involving the reactive cysteines. Under reducing conditions zinc is bound to the reactive cysteines and the protein is inactive.

The protein localises to the cytoplasm. In terms of biological role, redox regulated molecular chaperone. Protects both thermally unfolding and oxidatively damaged proteins from irreversible aggregation. Plays an important role in the bacterial defense system toward oxidative stress. In Hahella chejuensis (strain KCTC 2396), this protein is 33 kDa chaperonin.